Reading from the N-terminus, the 155-residue chain is 2-C-methyl-D-erythritol 2,4-cyclodiphosphate synthase (155 aa).

Residues Asp8 and His10 each contribute to the a divalent metal cation site. 4-CDP-2-C-methyl-D-erythritol 2-phosphate-binding positions include 8–10 (DVH) and 34–35 (HS). His42 is an a divalent metal cation binding site. Residues 56–58 (DIG), 61–65 (FPDKD), 132–135 (TTTE), and Arg142 each bind 4-CDP-2-C-methyl-D-erythritol 2-phosphate.

This sequence belongs to the IspF family. Homotrimer. It depends on a divalent metal cation as a cofactor.

The catalysed reaction is 4-CDP-2-C-methyl-D-erythritol 2-phosphate = 2-C-methyl-D-erythritol 2,4-cyclic diphosphate + CMP. Its pathway is isoprenoid biosynthesis; isopentenyl diphosphate biosynthesis via DXP pathway; isopentenyl diphosphate from 1-deoxy-D-xylulose 5-phosphate: step 4/6. Its function is as follows. Involved in the biosynthesis of isopentenyl diphosphate (IPP) and dimethylallyl diphosphate (DMAPP), two major building blocks of isoprenoid compounds. Catalyzes the conversion of 4-diphosphocytidyl-2-C-methyl-D-erythritol 2-phosphate (CDP-ME2P) to 2-C-methyl-D-erythritol 2,4-cyclodiphosphate (ME-CPP) with a corresponding release of cytidine 5-monophosphate (CMP). This is 2-C-methyl-D-erythritol 2,4-cyclodiphosphate synthase from Desulfatibacillum aliphaticivorans.